The chain runs to 182 residues: MMQICDTYNQKHSLFNAMNRFIGAVNNMDQTVMVPSLLRDVPLSEPEIDEVSVEVGGSGGCLEERTTPAPSPGSANESFFAPSRDMYSHYVLLKSIRNDIEWGVLHQPSSPPAGSEESTWKPKDILVGLSHLESADAGEEDLEQQFHYHLRGLHTVLSKLTRKANILTNRYKQEIGFSNWGH.

Methionine 1 carries the post-translational modification N-acetylmethionine. Residues 55–75 are disordered; the sequence is VGGSGGCLEERTTPAPSPGSA. A phosphoserine mark is found at serine 71, serine 74, and serine 78.

It belongs to the SPOT14 family. Homodimer in the absence of THRSP. Heterodimer with THRSP. The homodimer interacts with ACACA and ACACB. Promotes polymerization of Acetyl-CoA carboxylase to form complexes that contain MID1IP1 and ACACA and/or ACACB. Interaction with THRSP interferes with ACACA binding. As to expression, during embryonic development, expressed mainly in the neuroepithelial midline, urogenital apparatus and digits. Detected in adult white fat, liver, heart, brain and kidney. Expressed at very low levels in lactating mammary gland.

Its subcellular location is the nucleus. It localises to the cytoplasm. The protein resides in the cytoskeleton. Plays a role in the regulation of lipogenesis in liver. Up-regulates ACACA enzyme activity. Required for efficient lipid biosynthesis, including triacylglycerol, diacylglycerol and phospholipid. Involved in stabilization of microtubules. The chain is Mid1-interacting protein 1 (Mid1ip1) from Mus musculus (Mouse).